Consider the following 145-residue polypeptide: D-aminoacyl-tRNA deacylase (145 aa).

Positions 137 to 138 match the Gly-cisPro motif, important for rejection of L-amino acids motif; sequence GP.

The protein belongs to the DTD family. As to quaternary structure, homodimer.

The protein localises to the cytoplasm. The enzyme catalyses glycyl-tRNA(Ala) + H2O = tRNA(Ala) + glycine + H(+). It carries out the reaction a D-aminoacyl-tRNA + H2O = a tRNA + a D-alpha-amino acid + H(+). Its function is as follows. An aminoacyl-tRNA editing enzyme that deacylates mischarged D-aminoacyl-tRNAs. Also deacylates mischarged glycyl-tRNA(Ala), protecting cells against glycine mischarging by AlaRS. Acts via tRNA-based rather than protein-based catalysis; rejects L-amino acids rather than detecting D-amino acids in the active site. By recycling D-aminoacyl-tRNA to D-amino acids and free tRNA molecules, this enzyme counteracts the toxicity associated with the formation of D-aminoacyl-tRNA entities in vivo and helps enforce protein L-homochirality. This is D-aminoacyl-tRNA deacylase from Photorhabdus laumondii subsp. laumondii (strain DSM 15139 / CIP 105565 / TT01) (Photorhabdus luminescens subsp. laumondii).